The sequence spans 79 residues: Cytochrome c oxidase subunit 7A1, mitochondrial (79 aa).

Residues 1–21 (MQALRVSQALIRSFSSTARNR) constitute a mitochondrion transit peptide. The Mitochondrial matrix portion of the chain corresponds to 22 to 46 (FQNRVREKQKLFQEDNDIPLYLKGG). A helical transmembrane segment spans residues 47 to 75 (IVDNILYRVTMTLCLGGTVYSLYSLGWAS). Residues 76 to 79 (FPRN) lie on the Mitochondrial intermembrane side of the membrane.

Belongs to the cytochrome c oxidase VIIa family. Component of the complex IV (CIV, cytochrome c oxidase), a multisubunit enzyme composed of 14 subunits. The complex is composed of a catalytic core of 3 subunits MT-CO1, MT-CO2 and MT-CO3, encoded in the mitochondrial DNA, and 11 supernumerary subunits COX4I1 (or COX4I2), COX5A, COX5B, COX6A2 (or COX6A1), COX6B1 (or COX6B2), COX6C, COX7A1 (or COX7A2), COX7B, COX7C, COX8B and NDUFA4, which are encoded in the nuclear genome. The complex exists as a monomer or a dimer and forms supercomplexes (SCs) in the inner mitochondrial membrane with NADH-ubiquinone oxidoreductase (complex I, CI) and ubiquinol-cytochrome c oxidoreductase (cytochrome b-c1 complex, complex III, CIII), resulting in different assemblies (supercomplex SCI(1)III(2)IV(1) and megacomplex MCI(2)III(2)IV(2)).

Its subcellular location is the mitochondrion inner membrane. It functions in the pathway energy metabolism; oxidative phosphorylation. Functionally, component of the mitochondrial respiratory complex IV (CIV, also named cytochrome c oxidase complex), the last enzyme in the mitochondrial electron transport chain which drives oxidative phosphorylation. The CIV complex is the component of the respiratory chain that catalyzes the reduction of oxygen to water. Acts as an assembly factor that specifically drives the homodimerization of CIV complexes, mediating the formation of mitochondrial respiratory supercomplexes (respirasomes) containing two CIV: supercomplxes with two molecules of CIV show improved activity. Despite being highly expressed in brown adipose tissue, not required for thermogenesis. In Homo sapiens (Human), this protein is Cytochrome c oxidase subunit 7A1, mitochondrial (COX7A1).